We begin with the raw amino-acid sequence, 325 residues long: Cytochrome f (325 aa).

Positions Met1–Ala40 are cleaved as a signal peptide. Tyr41, Cys62, Cys65, and His66 together coordinate heme. Residues Val291 to Lys311 form a helical membrane-spanning segment.

The protein belongs to the cytochrome f family. The 4 large subunits of the cytochrome b6-f complex are cytochrome b6, subunit IV (17 kDa polypeptide, PetD), cytochrome f and the Rieske protein, while the 4 small subunits are PetG, PetL, PetM and PetN. The complex functions as a dimer. The cofactor is heme.

Its subcellular location is the cellular thylakoid membrane. Functionally, component of the cytochrome b6-f complex, which mediates electron transfer between photosystem II (PSII) and photosystem I (PSI), cyclic electron flow around PSI, and state transitions. The protein is Cytochrome f of Trichodesmium erythraeum (strain IMS101).